The primary structure comprises 344 residues: Heat-inducible transcription repressor HrcA (344 aa).

The protein belongs to the HrcA family.

In terms of biological role, negative regulator of class I heat shock genes (grpE-dnaK-dnaJ and groELS operons). Prevents heat-shock induction of these operons. The polypeptide is Heat-inducible transcription repressor HrcA (Streptococcus sanguinis (strain SK36)).